We begin with the raw amino-acid sequence, 71 residues long: Small ribosomal subunit protein bS18 (71 aa).

Belongs to the bacterial ribosomal protein bS18 family. Part of the 30S ribosomal subunit. Forms a tight heterodimer with protein bS6.

In terms of biological role, binds as a heterodimer with protein bS6 to the central domain of the 16S rRNA, where it helps stabilize the platform of the 30S subunit. This chain is Small ribosomal subunit protein bS18, found in Dichelobacter nodosus (strain VCS1703A).